The sequence spans 391 residues: 2,4,6-trihydroxybenzophenone synthase (391 aa).

The active site involves cysteine 165.

It belongs to the thiolase-like superfamily. Chalcone/stilbene synthases family. Homodimer. In terms of tissue distribution, expressed in young fruit pericarp.

The enzyme catalyses benzoyl-CoA + 3 malonyl-CoA + 2 H(+) = 2,4,6-trihydroxybenzophenone + 3 CO2 + 4 CoA. Functionally, type III polyketide synthase involved in the biosynthesis of benzophenones and xanthones. Produces mainly 2,4,6-trihydroxybenzophenone together with minor amounts of tetraketide lactone, triketide lactone and diketide lactone. The preferred substrate is benzoyl-CoA, but can also use acetyl-CoA, phenylacetyl-CoA, hexanoyl-CoA, cinnamoyl-CoA, p-coumaroyl-CoA and salicoyl-CoA. This chain is 2,4,6-trihydroxybenzophenone synthase (BPS), found in Garcinia mangostana (Mangosteen).